The chain runs to 616 residues: Large ribosomal subunit assembly factor BipA (616 aa).

The tr-type G domain maps to Lys8–Lys204. Residues Asp20 to Thr25 and Asn134 to Asp137 contribute to the GTP site.

Belongs to the TRAFAC class translation factor GTPase superfamily. Classic translation factor GTPase family. BipA subfamily. Monomer.

It is found in the cytoplasm. It carries out the reaction GTP + H2O = GDP + phosphate + H(+). Functionally, a 50S ribosomal subunit assembly protein with GTPase activity, required for 50S subunit assembly at low temperatures, may also play a role in translation. Binds GTP and analogs. Binds the 70S ribosome between the 30S and 50S subunits, in a similar position as ribosome-bound EF-G; it contacts a number of ribosomal proteins, both rRNAs and the A-site tRNA. The sequence is that of Large ribosomal subunit assembly factor BipA from Haemophilus influenzae (strain ATCC 51907 / DSM 11121 / KW20 / Rd).